Here is a 278-residue protein sequence, read N- to C-terminus: Dermonecrotic toxin LspiSicTox-betaIE2i (278 aa).

Histidine 5 is an active-site residue. Residues glutamate 25 and aspartate 27 each coordinate Mg(2+). Histidine 41 functions as the Nucleophile in the catalytic mechanism. 2 disulfide bridges follow: cysteine 45-cysteine 51 and cysteine 47-cysteine 190. Glutamate 85 is a binding site for Mg(2+).

It belongs to the arthropod phospholipase D family. Class II subfamily. Mg(2+) is required as a cofactor. As to expression, expressed by the venom gland.

The protein localises to the secreted. The catalysed reaction is an N-(acyl)-sphingosylphosphocholine = an N-(acyl)-sphingosyl-1,3-cyclic phosphate + choline. The enzyme catalyses an N-(acyl)-sphingosylphosphoethanolamine = an N-(acyl)-sphingosyl-1,3-cyclic phosphate + ethanolamine. It catalyses the reaction a 1-acyl-sn-glycero-3-phosphocholine = a 1-acyl-sn-glycero-2,3-cyclic phosphate + choline. It carries out the reaction a 1-acyl-sn-glycero-3-phosphoethanolamine = a 1-acyl-sn-glycero-2,3-cyclic phosphate + ethanolamine. Its function is as follows. Dermonecrotic toxins cleave the phosphodiester linkage between the phosphate and headgroup of certain phospholipids (sphingolipid and lysolipid substrates), forming an alcohol (often choline) and a cyclic phosphate. This toxin acts on sphingomyelin (SM). It may also act on ceramide phosphoethanolamine (CPE), lysophosphatidylcholine (LPC) and lysophosphatidylethanolamine (LPE), but not on lysophosphatidylserine (LPS), and lysophosphatidylglycerol (LPG). It acts by transphosphatidylation, releasing exclusively cyclic phosphate products as second products. Induces dermonecrosis, hemolysis, increased vascular permeability, edema, inflammatory response, and platelet aggregation. The sequence is that of Dermonecrotic toxin LspiSicTox-betaIE2i from Loxosceles spinulosa (Recluse spider).